Reading from the N-terminus, the 273-residue chain is Putative phosphoenolpyruvate synthase regulatory protein (273 aa).

153-160 contributes to the ADP binding site; it reads AVSRAGKT.

This sequence belongs to the pyruvate, phosphate/water dikinase regulatory protein family. PSRP subfamily.

It carries out the reaction [pyruvate, water dikinase] + ADP = [pyruvate, water dikinase]-phosphate + AMP + H(+). It catalyses the reaction [pyruvate, water dikinase]-phosphate + phosphate + H(+) = [pyruvate, water dikinase] + diphosphate. In terms of biological role, bifunctional serine/threonine kinase and phosphorylase involved in the regulation of the phosphoenolpyruvate synthase (PEPS) by catalyzing its phosphorylation/dephosphorylation. The protein is Putative phosphoenolpyruvate synthase regulatory protein of Xylella fastidiosa (strain M23).